The sequence spans 63 residues: Alpha-conotoxin-like PuSG1.1 (63 aa).

An N-terminal signal peptide occupies residues 1–21 (MRCLAFLVVTLLLFTATATTG). Positions 22–43 (ASNGMNAAASGEAPDSISLAVR) are excised as a propeptide. 2 disulfides stabilise this stretch: Cys-46-Cys-52 and Cys-47-Cys-60. The tract at residues 48–50 (PDP) is lacks the Ser-Xaa-Pro motif that is crucial for potent interaction with nAChR.

This sequence belongs to the conotoxin A superfamily. As to expression, expressed by the salivary gland.

It localises to the secreted. Functionally, alpha-conopeptides-like may act on postsynaptic membranes, they bind to the nicotinic acetylcholine receptors (nAChR) and thus inhibit them. Has possibly a distinct nAChR binding mode from other alpha-conotoxins, due to a different three residue motif (lacks the Ser-Xaa-Pro motif). The polypeptide is Alpha-conotoxin-like PuSG1.1 (Conus pulicarius (Flea-bitten cone)).